The following is a 1009-amino-acid chain: Rho-type GTPase-activating protein 2 (1009 aa).

2 LIM zinc-binding domains span residues 11 to 68 and 69 to 129; these read SLCV…DCSD and KCTN…LLRK. The segment covering 143–155 has biased composition (basic and acidic residues); it reads KEDFPIKLPERSV. 5 disordered regions span residues 143-228, 358-433, 449-608, 664-709, and 723-780; these read KEDF…RTVS, TKEN…LSRS, TSEM…DATD, TREK…ASPK, and QVGD…DYTP. The span at 162 to 196 shows a compositional bias: polar residues; sequence TRINGKSDVSTNNTAISKNLVSSNEDQQLTPQVLV. Positions 212 to 222 are enriched in basic and acidic residues; it reads DNSKDREETSS. 2 stretches are compositionally biased toward polar residues: residues 363 to 385 and 399 to 414; these read KSSQ…ITRT and LRLS…QTAD. The span at 481–491 shows a compositional bias: basic residues; the sequence is NIRKSKAKKNP. Polar residues-rich tracts occupy residues 493 to 510 and 522 to 553; these read SRGQ…QHGN and QSSL…SSSG. The segment covering 664–682 has biased composition (basic and acidic residues); that stretch reads TREKDKQSASSRESLEQKE. Polar residues-rich tracts occupy residues 683 to 707 and 728 to 749; these read NIAT…SNAS and ESQQ…QKEI. Ser-763 is subject to Phosphoserine. One can recognise a Rho-GAP domain in the interval 788-1006; that stretch reads SSLQARCAYE…FILGNYRDIF (219 aa).

Its function is as follows. GTPase-activating protein (GAP) for CDC42 and/or RHO1. The chain is Rho-type GTPase-activating protein 2 (RGA2) from Saccharomyces cerevisiae (strain ATCC 204508 / S288c) (Baker's yeast).